Reading from the N-terminus, the 517-residue chain is MDIIGGQHLRQMWDDLADVYGHKTALICESSGGVVNRYSYLELNQEINRTANLFYTLGIRKGDKVALHLDNCPEFIFCWFGLAKIGAIMVPINARLLREESAWILQNSQACLLVTSAQFYPMYQQIQQEDATQLRHICLTDVALPADDGVSSFTQLKNQQPATLCYAPPLSTDDTAEILFTSGTTSRPKGVVITHYNLRFAGYYSAWQCALRDDDVYLTVMPAFHIDCQCTAAMAAFSAGATFVLVEKYSARAFWGQVQKYRATITECIPMMIRTLMVQPPSANDRQHRLREVMFYLNLSEQEKDAFCERFGVRLLTSYGMTETIVGIIGDRPGDKRRWPSIGRAGFCYEAEIRDDHNRPLPAGEIGEICIKGVPGKTIFKEYFLNPKATAKVLEADGWLHTGDTGYCDEEGFFYFVDRRCNMIKRGGENVSCVELENIIATHPKIQDIVVVGIKDSIRDEAIKAFVVLNEGETLSEEEFFRFCEQNMAKFKVPSYLEIRKDLPRNCSGKIIRKNLK.

The protein belongs to the ATP-dependent AMP-binding enzyme family.

It carries out the reaction 4-(trimethylamino)butanoate + ATP + CoA = 4-(trimethylamino)butanoyl-CoA + AMP + diphosphate. The catalysed reaction is crotonobetaine + ATP + CoA = crotonobetainyl-CoA + AMP + diphosphate. The enzyme catalyses (R)-carnitine + ATP + CoA = (R)-carnitinyl-CoA + AMP + diphosphate. It participates in amine and polyamine metabolism; carnitine metabolism. In terms of biological role, catalyzes the transfer of CoA to carnitine, generating the initial carnitinyl-CoA needed for the CaiB reaction cycle. Also has activity toward crotonobetaine and gamma-butyrobetaine. The polypeptide is Crotonobetaine/carnitine--CoA ligase (Escherichia coli O9:H4 (strain HS)).